Reading from the N-terminus, the 266-residue chain is Protein YABBY 5 (266 aa).

The tract at residues 1-22 (MMSSAPETFSLDHLSQHQQQQP) is disordered. The C4-type zinc-finger motif lies at 36-63 (CNFCDTILAVGVPCSSLFKTVTVRCGHC). The span at 119-141 (ASPNVSSITSSNSSCANNAPATS) shows a compositional bias: low complexity. The interval 119–174 (ASPNVSSITSSNSSCANNAPATSMASAANKATQREPQQPKNAPSANRTSEKRQRVP) is disordered. Residues 142–165 (MASAANKATQREPQQPKNAPSANR) show a composition bias toward polar residues.

This sequence belongs to the YABBY family.

Its subcellular location is the nucleus. In terms of biological role, may be involved in leaf cell growth and differentiation, rather than abaxial cell fate determination. In Oryza sativa subsp. indica (Rice), this protein is Protein YABBY 5 (YAB5).